Here is a 336-residue protein sequence, read N- to C-terminus: Tryptophan--tRNA ligase (336 aa).

Residues 15–17 and 24–25 contribute to the ATP site; these read QPT and GN. The short motif at 16 to 25 is the 'HIGH' region element; that stretch reads PTSDSLHLGN. Residue D141 participates in L-tryptophan binding. Residues 153-155, I192, and 201-205 contribute to the ATP site; these read GED and KMSKS. The short motif at 201-205 is the 'KMSKS' region element; sequence KMSKS.

This sequence belongs to the class-I aminoacyl-tRNA synthetase family. As to quaternary structure, homodimer.

The protein resides in the cytoplasm. It catalyses the reaction tRNA(Trp) + L-tryptophan + ATP = L-tryptophyl-tRNA(Trp) + AMP + diphosphate + H(+). In terms of biological role, catalyzes the attachment of tryptophan to tRNA(Trp). This is Tryptophan--tRNA ligase from Mycobacterium tuberculosis (strain CDC 1551 / Oshkosh).